Consider the following 231-residue polypeptide: UMP-CMP kinase (231 aa).

57–62 (GSGKGT) serves as a coordination point for ATP. Residues 77–106 (SAGDLLRREIASGSAYGSVILSTIREGKIV) are NMP. Residues Arg-83, 104–106 (KIV), and 131–134 (GFPR) each bind a ribonucleoside 5'-phosphate. Residue Asn-138 coordinates CMP. Positions 169-177 (NRNQGRVDD) are LID. Arg-170 serves as a coordination point for ATP. Positions 174 and 185 each coordinate a ribonucleoside 5'-phosphate. Residue Gly-213 coordinates ATP.

It belongs to the adenylate kinase family. UMP-CMP kinase subfamily. As to quaternary structure, monomer. The cofactor is Mg(2+).

The protein localises to the cytoplasm. It is found in the nucleus. It carries out the reaction CMP + ATP = CDP + ADP. The catalysed reaction is dCMP + ATP = dCDP + ADP. It catalyses the reaction UMP + ATP = UDP + ADP. Its function is as follows. Catalyzes the phosphorylation of pyrimidine nucleoside monophosphates at the expense of ATP. Plays an important role in de novo pyrimidine nucleotide biosynthesis. Has preference for UMP and CMP as phosphate acceptors. The polypeptide is UMP-CMP kinase (Prunus armeniaca (Apricot)).